We begin with the raw amino-acid sequence, 185 residues long: Probable RNA 2'-phosphotransferase (185 aa).

This sequence belongs to the KptA/TPT1 family.

In terms of biological role, removes the 2'-phosphate from RNA via an intermediate in which the phosphate is ADP-ribosylated by NAD followed by a presumed transesterification to release the RNA and generate ADP-ribose 1''-2''-cyclic phosphate (APPR&gt;P). May function as an ADP-ribosylase. In Bacillus thuringiensis subsp. konkukian (strain 97-27), this protein is Probable RNA 2'-phosphotransferase.